Reading from the N-terminus, the 641-residue chain is Lipase (641 aa).

The first 38 residues, Met1–Ala38, serve as a signal peptide directing secretion. Disordered regions lie at residues Ser41 to Asp174 and Thr206 to Val246. A compositionally biased stretch (low complexity) spans Gln53–Thr64. The span at Thr73 to Lys94 shows a compositional bias: basic and acidic residues. Polar residues-rich tracts occupy residues Thr95–Gln106 and Pro127–Asn139. Over residues Lys140–Thr165 the composition is skewed to basic and acidic residues. A compositionally biased stretch (polar residues) spans Glu227–Ala239. The Nucleophile role is filled by Ser369. Residue Gly535 participates in Ca(2+) binding. Asp559 (charge relay system) is an active-site residue. A Ca(2+)-binding site is contributed by Asp599. The active-site Charge relay system is the His600. Residues Asp602, Asp607, and Asp610 each contribute to the Ca(2+) site.

Belongs to the AB hydrolase superfamily. Lipase family. Ca(2+) is required as a cofactor.

Its subcellular location is the secreted. The catalysed reaction is a triacylglycerol + H2O = a diacylglycerol + a fatty acid + H(+). It carries out the reaction a 1,2-diacyl-sn-glycero-3-phosphocholine + H2O = a 2-acyl-sn-glycero-3-phosphocholine + a fatty acid + H(+). In terms of biological role, has a broad substrate specificity hydrolyzing a variety of triglycerides and phosphatidylcholines. The chain is Lipase (lip) from Staphylococcus hyicus.